The sequence spans 887 residues: CWF19-like protein 2 (887 aa).

A disordered region spans residues 1–143 (MEAFSVRFES…DKRTEEECDS (143 aa)). Positions 11 to 103 (ASSIEERKEQ…KKQKCQKQSE (93 aa)) form a coiled coil. A compositionally biased stretch (basic and acidic residues) spans 14–72 (IEERKEQTRNARAEVLRQAKHNFEKEQRGEERKRLRDEDTWMLPDVHERIEQFSQEHSE). Phosphoserine is present on serine 71. Residues 73 to 98 (KKKKKKDKHSKKVKKEKKKKRKKQKC) show a composition bias toward basic residues. A compositionally biased stretch (low complexity) spans 99-110 (QKQSESTDSSAS). The span at 124–143 (SDKEKTWKVKDKRTEEECDS) shows a compositional bias: basic and acidic residues. The stretch at 164–254 (SSSLKAEKET…RNFEDIVAEK (91 aa)) forms a coiled coil. Residue lysine 168 forms a Glycyl lysine isopeptide (Lys-Gly) (interchain with G-Cter in SUMO2) linkage. Disordered regions lie at residues 315-370 (LEME…DEDE) and 405-447 (SEES…GRRE). Residues 342–352 (CRRESALRKNQ) show a composition bias toward basic and acidic residues. Serine 354 and serine 366 each carry phosphoserine. The span at 414–430 (RSDRRQENRKPSDKKPL) shows a compositional bias: basic and acidic residues. Positions 433–442 (WSYNANQHST) are enriched in polar residues. Residue serine 478 is modified to Phosphoserine. The stretch at 495–524 (IKAEMMGNMELAEQLKAQLKEANKFKETQM) forms a coiled coil. A Glycyl lysine isopeptide (Lys-Gly) (interchain with G-Cter in SUMO2) cross-link involves residue lysine 597. A Phosphoserine modification is found at serine 622.

Belongs to the CWF19 family.

In Mus musculus (Mouse), this protein is CWF19-like protein 2 (Cwf19l2).